Here is a 554-residue protein sequence, read N- to C-terminus: Arginine--tRNA ligase (554 aa).

The 'HIGH' region motif lies at 132-142 (ANPTGPIHLGG).

This sequence belongs to the class-I aminoacyl-tRNA synthetase family. As to quaternary structure, monomer.

It localises to the cytoplasm. It carries out the reaction tRNA(Arg) + L-arginine + ATP = L-arginyl-tRNA(Arg) + AMP + diphosphate. The sequence is that of Arginine--tRNA ligase from Clavibacter sepedonicus (Clavibacter michiganensis subsp. sepedonicus).